The primary structure comprises 256 residues: uncharacterized protein (256 aa).

The NADP(+) site is built by isoleucine 18, serine 37, lysine 46, aspartate 66, tyrosine 164, lysine 168, valine 197, and threonine 199. The Proton donor role is filled by tyrosine 164. Lysine 168 acts as the Lowers pKa of active site Tyr in catalysis.

It belongs to the short-chain dehydrogenases/reductases (SDR) family.

The protein localises to the cytoplasm. This is an uncharacterized protein from Saccharomyces cerevisiae (strain ATCC 204508 / S288c) (Baker's yeast).